The primary structure comprises 591 residues: F420 non-reducing hydrogenase II large subunit (591 aa).

Glu42 lines the Mg(2+) pocket. The Ni(2+) site is built by Cys61, Cys64, Cys569, and Cys572. A Fe cation-binding site is contributed by Cys64. Position 572 (Cys572) interacts with Fe cation. Residue His575 coordinates Mg(2+).

Belongs to the [NiFe]/[NiFeSe] hydrogenase large subunit family. As to quaternary structure, composed of a large subunit (VhtA), a small subunit (VhtG) and a cytochrome subunit (VhtC). It depends on Ni(2+) as a cofactor. Fe cation is required as a cofactor.

The protein resides in the cell membrane. It catalyses the reaction methanophenazine + H2 = dihydromethanophenazine. Functionally, part of the F420 non-reducing hydrogenase II complex that catalyzes the reduction of methanophenazine to dihydromethanophenazine. The protein is F420 non-reducing hydrogenase II large subunit of Methanosarcina mazei (strain ATCC BAA-159 / DSM 3647 / Goe1 / Go1 / JCM 11833 / OCM 88) (Methanosarcina frisia).